Here is a 373-residue protein sequence, read N- to C-terminus: tRNA (guanine(26)-N(2))-dimethyltransferase (373 aa).

In terms of domain architecture, Trm1 methyltransferase spans 2 to 365 (KIISEGETKL…AELSDLVVLI (364 aa)). R35, R66, D86, D113, and A114 together coordinate S-adenosyl-L-methionine.

This sequence belongs to the class I-like SAM-binding methyltransferase superfamily. Trm1 family.

The enzyme catalyses guanosine(26) in tRNA + 2 S-adenosyl-L-methionine = N(2)-dimethylguanosine(26) in tRNA + 2 S-adenosyl-L-homocysteine + 2 H(+). Its function is as follows. Dimethylates a single guanine residue at position 26 of a number of tRNAs using S-adenosyl-L-methionine as donor of the methyl groups. The protein is tRNA (guanine(26)-N(2))-dimethyltransferase of Methanococcus maripaludis (strain C6 / ATCC BAA-1332).